Consider the following 316-residue polypeptide: tRNA dimethylallyltransferase (316 aa).

27–34 (GATATGKT) contacts ATP. Residue 29 to 34 (TATGKT) coordinates substrate. The interval 52 to 55 (DSRQ) is interaction with substrate tRNA.

The protein belongs to the IPP transferase family. In terms of assembly, monomer. The cofactor is Mg(2+).

It carries out the reaction adenosine(37) in tRNA + dimethylallyl diphosphate = N(6)-dimethylallyladenosine(37) in tRNA + diphosphate. Functionally, catalyzes the transfer of a dimethylallyl group onto the adenine at position 37 in tRNAs that read codons beginning with uridine, leading to the formation of N6-(dimethylallyl)adenosine (i(6)A). The sequence is that of tRNA dimethylallyltransferase from Treponema pallidum (strain Nichols).